A 152-amino-acid chain; its full sequence is Deoxyuridine 5'-triphosphate nucleotidohydrolase (152 aa).

Substrate is bound by residues R71 to G73, N84, L88 to D90, and M98.

It belongs to the dUTPase family. Mg(2+) is required as a cofactor.

It carries out the reaction dUTP + H2O = dUMP + diphosphate + H(+). It functions in the pathway pyrimidine metabolism; dUMP biosynthesis; dUMP from dCTP (dUTP route): step 2/2. This enzyme is involved in nucleotide metabolism: it produces dUMP, the immediate precursor of thymidine nucleotides and it decreases the intracellular concentration of dUTP so that uracil cannot be incorporated into DNA. The polypeptide is Deoxyuridine 5'-triphosphate nucleotidohydrolase (Shewanella amazonensis (strain ATCC BAA-1098 / SB2B)).